The primary structure comprises 123 residues: NADH-quinone oxidoreductase subunit A (123 aa).

Transmembrane regions (helical) follow at residues 11–31, 67–87, and 92–112; these read FPVLMFLLVGTGLGVALVSIG, LVAILFIIFDLETAFLFPWGV, and IGWPGFISMMIFLLEFLLGFA.

Belongs to the complex I subunit 3 family. NDH-1 is composed of 14 different subunits. Subunits NuoA, H, J, K, L, M, N constitute the membrane sector of the complex.

The protein localises to the cell inner membrane. It catalyses the reaction a quinone + NADH + 5 H(+)(in) = a quinol + NAD(+) + 4 H(+)(out). Its function is as follows. NDH-1 shuttles electrons from NADH, via FMN and iron-sulfur (Fe-S) centers, to quinones in the respiratory chain. The immediate electron acceptor for the enzyme in this species is believed to be ubiquinone. Couples the redox reaction to proton translocation (for every two electrons transferred, four hydrogen ions are translocated across the cytoplasmic membrane), and thus conserves the redox energy in a proton gradient. This chain is NADH-quinone oxidoreductase subunit A, found in Paraburkholderia phymatum (strain DSM 17167 / CIP 108236 / LMG 21445 / STM815) (Burkholderia phymatum).